An 806-amino-acid polypeptide reads, in one-letter code: Centrosomal protein of 85 kDa-like (806 aa).

Disordered stretches follow at residues 1–27, 51–89, and 101–146; these read MWGR…AGSD, NNHL…LSFK, and HVMP…SSLD. Position 15 is a phosphoserine (S15). Over residues 60–74 the composition is skewed to polar residues; that stretch reads TSDSGDTGIGTSCSD. A compositionally biased stretch (basic and acidic residues) spans 135–146; the sequence is DHSRGERDSSLD. S207 is subject to Phosphoserine. The disordered stretch occupies residues 308–353; sequence PLEGRTTDDSYSLAPWQQPQTEEFQQGSETPMQVLTGSSRQSYSPP. The segment covering 322 to 351 has biased composition (polar residues); it reads PWQQPQTEEFQQGSETPMQVLTGSSRQSYS. Positions 442 to 644 form a coiled coil; it reads QEELEQKLAS…ILEIQSMQGK (203 aa).

This sequence belongs to the CEP85 family.

It is found in the cytoplasm. Its subcellular location is the cytoskeleton. It localises to the microtubule organizing center. The protein localises to the centrosome. In terms of biological role, plays an essential role in neuronal cell migration. The polypeptide is Centrosomal protein of 85 kDa-like (Mus musculus (Mouse)).